A 184-amino-acid polypeptide reads, in one-letter code: Putative pre-16S rRNA nuclease (184 aa).

Residues 1–23 (MFSSQHRLLYQPSGPDLSKNLDP) are disordered.

It belongs to the YqgF nuclease family.

The protein localises to the cytoplasm. Functionally, could be a nuclease involved in processing of the 5'-end of pre-16S rRNA. This is Putative pre-16S rRNA nuclease from Mycobacterium leprae (strain Br4923).